Consider the following 393-residue polypeptide: Lipid-A-disaccharide synthase (393 aa).

The protein belongs to the LpxB family.

The catalysed reaction is a lipid X + a UDP-2-N,3-O-bis[(3R)-3-hydroxyacyl]-alpha-D-glucosamine = a lipid A disaccharide + UDP + H(+). It functions in the pathway bacterial outer membrane biogenesis; LPS lipid A biosynthesis. Condensation of UDP-2,3-diacylglucosamine and 2,3-diacylglucosamine-1-phosphate to form lipid A disaccharide, a precursor of lipid A, a phosphorylated glycolipid that anchors the lipopolysaccharide to the outer membrane of the cell. The protein is Lipid-A-disaccharide synthase of Granulibacter bethesdensis (strain ATCC BAA-1260 / CGDNIH1).